Reading from the N-terminus, the 376-residue chain is Probable deoxyhypusine synthase (376 aa).

NAD(+) is bound by residues 105–109, 131–133, E137, and D238; these read SNLVS and TAG. 136–137 is a spermidine binding site; that stretch reads EE. D243 contributes to the spermidine binding site. Position 283 (G283) interacts with NAD(+). Spermidine is bound at residue H288. NAD(+) is bound at residue 308–309; the sequence is TG. Residues 314–316 and 323–329 contribute to the spermidine site; these read GSD and EAVSWGK. K329 acts as the Nucleophile in catalysis. 342–343 is an NAD(+) binding site; the sequence is EA.

It belongs to the deoxyhypusine synthase family. It depends on NAD(+) as a cofactor.

The enzyme catalyses [eIF5A protein]-L-lysine + spermidine = [eIF5A protein]-deoxyhypusine + propane-1,3-diamine. It participates in protein modification; eIF5A hypusination. Its function is as follows. Catalyzes the NAD-dependent oxidative cleavage of spermidine and the subsequent transfer of the butylamine moiety of spermidine to the epsilon-amino group of a critical lysine residue of the eIF-5A precursor protein to form the intermediate deoxyhypusine residue. This is the first step of the post-translational modification of that lysine into an unusual amino acid residue named hypusine. Hypusination is unique to mature eIF-5A factor and is essential for its function. This Dictyostelium discoideum (Social amoeba) protein is Probable deoxyhypusine synthase (dhps).